Consider the following 611-residue polypeptide: Large ribosomal subunit assembly factor BipA (611 aa).

Residues 7 to 202 enclose the tr-type G domain; that stretch reads KNLRNIAIIA…AIVKYTPPPT (196 aa). Residues 19-24 and 132-135 each bind GTP; these read DHGKTT and NKID.

It belongs to the TRAFAC class translation factor GTPase superfamily. Classic translation factor GTPase family. BipA subfamily. As to quaternary structure, monomer.

It localises to the cytoplasm. The enzyme catalyses GTP + H2O = GDP + phosphate + H(+). Functionally, a 50S ribosomal subunit assembly protein with GTPase activity, required for 50S subunit assembly at low temperatures, may also play a role in translation. Binds GTP and analogs. Binds the 70S ribosome between the 30S and 50S subunits, in a similar position as ribosome-bound EF-G; it contacts a number of ribosomal proteins, both rRNAs and the A-site tRNA. This Buchnera aphidicola subsp. Baizongia pistaciae (strain Bp) protein is Large ribosomal subunit assembly factor BipA.